A 189-amino-acid polypeptide reads, in one-letter code: Calcium and integrin-binding family member 2 (189 aa).

EF-hand domains follow at residues 68–103 (RENPFRRRICEAFSRDGQGNLSFEDFLDALSVFSEQ), 105–140 (PRDIKVFYAFKIYDFDQDGFIGHADLMSCLTTMTKN), and 146–181 (EHQQIADKVIEEADVDGDGKLSILEFEHVILRAPDF). Ca(2+)-binding residues include Asp118, Asp120, Asp122, Asp129, Asp159, Asp161, Asp163, Lys165, and Glu170.

In terms of assembly, monomer. Homodimer.

The protein localises to the cytoplasm. Its function is as follows. Calcium- and integrin-binding protein. Plays a role in intracellular calcium homeostasis. Critical for proper photoreceptor cell maintenance and function. Required for prevention of light-dependent retinal degeneration. The protein is Calcium and integrin-binding family member 2 of Drosophila melanogaster (Fruit fly).